Consider the following 274-residue polypeptide: Dermonecrotic toxin SdSicTox-betaIIB1bxii (274 aa).

His-5 is a catalytic residue. Mg(2+) contacts are provided by Glu-25 and Asp-27. The active-site Nucleophile is His-41. Intrachain disulfides connect Cys-45–Cys-51 and Cys-47–Cys-190. Residue Asp-85 coordinates Mg(2+).

Belongs to the arthropod phospholipase D family. Class II subfamily. Mg(2+) is required as a cofactor. In terms of tissue distribution, expressed by the venom gland.

The protein localises to the secreted. It carries out the reaction an N-(acyl)-sphingosylphosphocholine = an N-(acyl)-sphingosyl-1,3-cyclic phosphate + choline. The enzyme catalyses an N-(acyl)-sphingosylphosphoethanolamine = an N-(acyl)-sphingosyl-1,3-cyclic phosphate + ethanolamine. The catalysed reaction is a 1-acyl-sn-glycero-3-phosphocholine = a 1-acyl-sn-glycero-2,3-cyclic phosphate + choline. It catalyses the reaction a 1-acyl-sn-glycero-3-phosphoethanolamine = a 1-acyl-sn-glycero-2,3-cyclic phosphate + ethanolamine. Dermonecrotic toxins cleave the phosphodiester linkage between the phosphate and headgroup of certain phospholipids (sphingolipid and lysolipid substrates), forming an alcohol (often choline) and a cyclic phosphate. This toxin acts on sphingomyelin (SM). It may also act on ceramide phosphoethanolamine (CPE), lysophosphatidylcholine (LPC) and lysophosphatidylethanolamine (LPE), but not on lysophosphatidylserine (LPS), and lysophosphatidylglycerol (LPG). It acts by transphosphatidylation, releasing exclusively cyclic phosphate products as second products. Induces dermonecrosis, hemolysis, increased vascular permeability, edema, inflammatory response, and platelet aggregation. The polypeptide is Dermonecrotic toxin SdSicTox-betaIIB1bxii (Sicarius cf. damarensis (strain GJB-2008) (Six-eyed sand spider)).